The primary structure comprises 313 residues: Cilia- and flagella-associated protein 36 (313 aa).

Phosphoserine is present on residues S85 and S147. A coiled-coil region spans residues 147–187 (SDLEQEEMKILKEVLRKSKEEYDQEEERKRKKQLSEAKTEE). Disordered regions lie at residues 165–204 (KEEYDQEEERKRKKQLSEAKTEEHPMQANETAKMSNSQGD) and 262–292 (KIKQNQTSEQKGKPAGEVEEMTEKPEMTAEE). Positions 179–189 (QLSEAKTEEHP) are enriched in basic and acidic residues. Polar residues predominate over residues 192–203 (ANETAKMSNSQG). S201 is subject to Phosphoserine. Residues 271–292 (QKGKPAGEVEEMTEKPEMTAEE) are compositionally biased toward basic and acidic residues.

Belongs to the CFAP36 family. Interacts with ARL3.

It is found in the nucleus. The protein resides in the cytoplasm. It localises to the cell projection. The protein localises to the cilium. Its subcellular location is the flagellum. Its function is as follows. May act as an effector for ARL3. This chain is Cilia- and flagella-associated protein 36, found in Bos taurus (Bovine).